We begin with the raw amino-acid sequence, 30 residues long: Unknown protein from spot 365 of 2D-PAGE of etiolated coleoptile (30 aa).

It belongs to the zinc-containing alcohol dehydrogenase family.

This Zea mays (Maize) protein is Unknown protein from spot 365 of 2D-PAGE of etiolated coleoptile.